Consider the following 366-residue polypeptide: Putative neutrophil cytosol factor 1C (366 aa).

The 101-residue stretch at M1–L101 folds into the PX domain. 2 consecutive SH3 domains span residues I132 to S191 and Y202 to Q261. The interval Q261–V366 is disordered. Phosphoserine is present on residues S279 and S280. The span at H285–R294 shows a compositional bias: basic residues. A phosphoserine mark is found at S296, S304, S321, and S324.

The protein localises to the cytoplasm. May be required for activation of the latent NADPH oxidase (necessary for superoxide production). The protein is Putative neutrophil cytosol factor 1C (NCF1C) of Homo sapiens (Human).